Here is a 388-residue protein sequence, read N- to C-terminus: MINYMIPKGFLCCGKHVGIKKRKLDLGVVYSEKLCSAAAVFTKNKFCGIPIIVGKENIKDNKLQSIVVTSGVANVATGEEGLKNTYRILNKLSCELNIKSENILPSSTGIIGKQLPIDCIITGINGIKSSLSKYNWEEFNRAIMTTDKELKIKSCKIGDATVLGIAKGSGMIEPNMATMLAYFFTDASIKAVELKGILKRAVDKSFNMISIDHDTSTSDTAAILANGYVGNVNLEVFEKTFTDMCIDMAKDIVRDGEGVSKLIEATVMGCSSFESAKVIAKSIINSPLVKIAIYGSDPNWGRIAMAIGKSFEDDVDPLKIEIAFNSNVIYDKGKIYEENFDCIERYLRDNNECKIQANLNVGDFAATVWGSDFTEDYIRINSYYTKRK.

Substrate contacts are provided by threonine 145, lysine 167, threonine 178, glutamate 257, and asparagine 381. Residue threonine 178 is the Nucleophile of the active site.

The protein belongs to the ArgJ family. In terms of assembly, heterotetramer of two alpha and two beta chains.

The protein localises to the cytoplasm. It carries out the reaction N(2)-acetyl-L-ornithine + L-glutamate = N-acetyl-L-glutamate + L-ornithine. The catalysed reaction is L-glutamate + acetyl-CoA = N-acetyl-L-glutamate + CoA + H(+). Its pathway is amino-acid biosynthesis; L-arginine biosynthesis; L-ornithine and N-acetyl-L-glutamate from L-glutamate and N(2)-acetyl-L-ornithine (cyclic): step 1/1. The protein operates within amino-acid biosynthesis; L-arginine biosynthesis; N(2)-acetyl-L-ornithine from L-glutamate: step 1/4. Functionally, catalyzes two activities which are involved in the cyclic version of arginine biosynthesis: the synthesis of N-acetylglutamate from glutamate and acetyl-CoA as the acetyl donor, and of ornithine by transacetylation between N(2)-acetylornithine and glutamate. In Clostridium acetobutylicum (strain ATCC 824 / DSM 792 / JCM 1419 / IAM 19013 / LMG 5710 / NBRC 13948 / NRRL B-527 / VKM B-1787 / 2291 / W), this protein is Arginine biosynthesis bifunctional protein ArgJ 2.